Reading from the N-terminus, the 253-residue chain is Sulfate transporter CysZ (253 aa).

4 helical membrane passes run 31–51 (FVILPLLVNILLMGGAFWWLF), 75–95 (LLWPLAVISVLLVFGYFFSTI), 151–171 (IVLLIIYFIPGIGQTVAPVLW), and 222–242 (IPLLNLFIMPVAVCGATAMWV).

The protein belongs to the CysZ family.

It localises to the cell inner membrane. High affinity, high specificity proton-dependent sulfate transporter, which mediates sulfate uptake. Provides the sulfur source for the cysteine synthesis pathway. The polypeptide is Sulfate transporter CysZ (Escherichia coli O139:H28 (strain E24377A / ETEC)).